A 316-amino-acid chain; its full sequence is Pantothenate kinase (316 aa).

95 to 102 (GSVAVGKS) provides a ligand contact to ATP.

This sequence belongs to the prokaryotic pantothenate kinase family.

Its subcellular location is the cytoplasm. The catalysed reaction is (R)-pantothenate + ATP = (R)-4'-phosphopantothenate + ADP + H(+). Its pathway is cofactor biosynthesis; coenzyme A biosynthesis; CoA from (R)-pantothenate: step 1/5. The chain is Pantothenate kinase from Shigella sonnei (strain Ss046).